A 377-amino-acid chain; its full sequence is D-alanine--D-alanine ligase (377 aa).

The ATP-grasp domain maps to Lys137–Gln346. An ATP-binding site is contributed by Ser167–Leu222. Positions 300, 313, and 315 each coordinate Mg(2+).

It belongs to the D-alanine--D-alanine ligase family. Requires Mg(2+) as cofactor. The cofactor is Mn(2+).

It localises to the cytoplasm. It carries out the reaction 2 D-alanine + ATP = D-alanyl-D-alanine + ADP + phosphate + H(+). It participates in cell wall biogenesis; peptidoglycan biosynthesis. In terms of biological role, cell wall formation. The chain is D-alanine--D-alanine ligase from Oenococcus oeni (strain ATCC BAA-331 / PSU-1).